The following is a 342-amino-acid chain: Putative aryl-alcohol dehydrogenase AAD16 (342 aa).

It belongs to the aldo/keto reductase family. Aldo/keto reductase 2 subfamily.

In terms of biological role, putative aryl-alcohol dehydrogenase. This chain is Putative aryl-alcohol dehydrogenase AAD16, found in Saccharomyces cerevisiae (strain ATCC 204508 / S288c) (Baker's yeast).